The primary structure comprises 614 residues: Ankyrin repeat domain-containing protein 55 (614 aa).

Positions 1–20 (MMRQATMDFSTPSVFDQQRG) are disordered. Residues 7 to 16 (MDFSTPSVFD) show a composition bias toward polar residues. 9 ANK repeats span residues 26 to 55 (VDLT…SILE), 60 to 89 (EGCT…NINM), 93 to 125 (YGRT…IPDK), 126 to 157 (NGRL…EINH), 161 to 190 (EGMT…DPTL), 194 to 223 (DFKT…GPSI), 230 to 260 (SGKT…NLQA), 264 to 293 (DDRT…DSNL), and 297 to 326 (NEST…TEPT). Disordered regions lie at residues 319 to 339 (QESR…PQKK), 354 to 375 (KKEE…EEDT), 454 to 476 (TSHA…SRSE), and 564 to 614 (RNNL…SDEN). Basic and acidic residues predominate over residues 354 to 373 (KKEEQRAHQKDPSRDRYREE). Serine 475 is subject to Phosphoserine.

This Homo sapiens (Human) protein is Ankyrin repeat domain-containing protein 55 (ANKRD55).